The chain runs to 1526 residues: MTEVISNKITAKDGATSLKDIDDKRWVWISDPETAFTKAWIKEDLPDKKYVVRYNNSRDEKIVGEDEIDPVNPAKFDRVNDMAELTYLNEPAVTYNLEQRYLSDQIYTYSGLFLVAVNPYCGLPIYTKDIIQLYKDKTQERKLPHVFAIADLAYNNLLENKENQSILVTGESGAGKTENTKRIIQYLAAIASSTTVGSSQVEEQIIKTNPVLESFGNARTVRNNNSSRFGKFIKVEFSLSGEISNAAIEWYLLEKSRVVHQNEFERNYHVFYQLLSGADTALKNKLLLTDNCNDYRYLKDSVHIIDGVDDKEEFKTLLAAFKTLGFDDKENFDLFNILSIILHMGNIDVGADRSGIARLLNPDEIDKLCHLLGVSPELFSQNLVRPRIKAGHEWVISARSQTQVISSIEALAKAIYERNFGWLVKRLNTSLNHSNAQSYFIGILDIAGFEIFEKNSFEQLCINYTNEKLQQFFNHHMFVLEQEEYMKEEIVWDFIDFGHDLQPTIDLIEKANPIGILSCLDEECVMPKATDATFTSKLDALWRNKSLKYKPFKFADQGFILTHYAADVPYSTEGWLEKNTDPLNENVAKLLAQSTNKHVATLFSDYQETETKTVRGRTKKGLFRTVAQRHKEQLNQLMNQFNSTQPHFIRCIVPNEEKKMHTFNRPLVLGQLRCNGVLEGIRITRAGFPNRLPFNDFRVRYEIMAHLPTGTYVESRRASVMILEELKIDEASYRIGVSKIFFKAGVLAELEERRVATLQRLMTMLQTRIRGFLQRKIFQKRLKDIQAIKLLQANLQVYNEFRTFPWAKLFFNLRPLLSSTQNDKQLKKRDAEIIELKYELKKQQNSKSEVERDLVETNNSLTAVENLLTTERAIALDKEEILRRTQERLANIEDSFSETKQQNENLQRESASLKQINNELESELLEKTSKVETLLSEQNELKEKLSLEEKDLLDTKGELESLRENNATVLSEKAEFNEQCKSLQETIVTKDAELDKLTKYISDYKTEIQEMRLTNQKMNEKSIQQEGSLSESLKRVKKLERENSTLISDVSILKQQKEELSVLKGVQELTINNLEEKVNYLEADVKQLPKLKKELESLNDKDQLYQLQATKNKELEAKVKECLNNIKSLTKELENKEEKCQNLSDASLKYIELQEIHENLLLKVSDLENYKKKYEGLQLDLEGLKDVDTNFQELSKKHRDLTFNHESLLRQSASYKEKLSLASSENKDLSNKVSSLTKQVNELSPKASKVPELERKITNLMHEYSQLGKTFEDEKRKALIASRDNEELRSLKSELESKRKLEVEYQKVLEEVKTTRSLRSEVTLLRNKVADHESIRSKLSEVEMKLVDTRKELNSALDSCKKREAEIHRLKEHRPSGKENNIPAVKTTEPVLKNIPQRKTIFDLQQRNANQALYENLKRDYDRLNLEKHNLEKQVNELKGAEVSPQPTGQSLQHVNLAHAIELKALKDQINSEKAKMFSVQVQYEKREQELQKRIASLEKVNKDSLIDVRALRDRIASLEDELRAA.

The region spanning Asp-22 to Pro-73 is the Myosin N-terminal SH3-like domain. Residues Asp-77 to Val-755 form the Myosin motor domain. Gly-170–Thr-177 serves as a coordination point for ATP. Actin-binding regions lie at residues Leu-634–Glu-656 and Arg-734–Ala-748. The region spanning Leu-758–Ala-787 is the IQ domain. A coiled-coil region spans residues Ala-875 to Ser-1244. The residue at position 1044 (Ser-1044) is a Phosphoserine.

Belongs to the TRAFAC class myosin-kinesin ATPase superfamily. Myosin family. Binds to cdc4 and rlc1.

Required for cell division. It is a component of the cdc12 'spot', a structure thought to mark the site of septation. May work in conjunction with myo3. This Schizosaccharomyces pombe (strain 972 / ATCC 24843) (Fission yeast) protein is Myosin type-2 heavy chain 1 (myo2).